The chain runs to 186 residues: Interferon beta-2 (186 aa).

A signal peptide spans 1–21 (MTHRCLLQMVLLLCFSTTALS). Cys52 and Cys161 are disulfide-bonded. 2 N-linked (GlcNAc...) asparagine glycosylation sites follow: Asn131 and Asn173.

The protein belongs to the alpha/beta interferon family. As to quaternary structure, monomer.

Its subcellular location is the secreted. Functionally, has antiviral, antibacterial and anticancer activities. The chain is Interferon beta-2 (IFNB2) from Bos taurus (Bovine).